We begin with the raw amino-acid sequence, 121 residues long: Large ribosomal subunit protein uL18 (121 aa).

Over residues 1-19 the composition is skewed to basic residues; the sequence is MASKKVQKIRDKRKARVRA. The segment at 1-23 is disordered; it reads MASKKVQKIRDKRKARVRAKISG.

It belongs to the universal ribosomal protein uL18 family. In terms of assembly, part of the 50S ribosomal subunit; part of the 5S rRNA/L5/L18/L25 subcomplex. Contacts the 5S and 23S rRNAs.

In terms of biological role, this is one of the proteins that bind and probably mediate the attachment of the 5S RNA into the large ribosomal subunit, where it forms part of the central protuberance. The sequence is that of Large ribosomal subunit protein uL18 from Syntrophus aciditrophicus (strain SB).